The sequence spans 336 residues: tRNA N6-adenosine threonylcarbamoyltransferase (336 aa).

Fe cation is bound by residues histidine 114 and histidine 118. Substrate-binding positions include 136–140, aspartate 169, glycine 182, aspartate 186, and asparagine 275; that span reads LVSGG. Position 301 (aspartate 301) interacts with Fe cation.

The protein belongs to the KAE1 / TsaD family. It depends on Fe(2+) as a cofactor.

Its subcellular location is the cytoplasm. It catalyses the reaction L-threonylcarbamoyladenylate + adenosine(37) in tRNA = N(6)-L-threonylcarbamoyladenosine(37) in tRNA + AMP + H(+). Functionally, required for the formation of a threonylcarbamoyl group on adenosine at position 37 (t(6)A37) in tRNAs that read codons beginning with adenine. Is involved in the transfer of the threonylcarbamoyl moiety of threonylcarbamoyl-AMP (TC-AMP) to the N6 group of A37, together with TsaE and TsaB. TsaD likely plays a direct catalytic role in this reaction. The chain is tRNA N6-adenosine threonylcarbamoyltransferase from Streptococcus gordonii (strain Challis / ATCC 35105 / BCRC 15272 / CH1 / DL1 / V288).